We begin with the raw amino-acid sequence, 201 residues long: DeSI-like protein sdu1 (201 aa).

The region spanning 1 to 143 (MKVYINVYDL…AFPTITNALL (143 aa)) is the PPPDE domain. Active-site residues include H29 and C105. Residues 146–201 (GQKNTSDVDDSSDSSSDVDEETLIVSKSKKAHKDIPKFSAPPPSADLNNLITDSLP) are disordered. The span at 152 to 167 (DVDDSSDSSSDVDEET) shows a compositional bias: acidic residues. Residues 191-201 (DLNNLITDSLP) show a composition bias toward polar residues.

The protein belongs to the DeSI family.

It is found in the cytoplasm. In terms of biological role, has a role in meiosis. The polypeptide is DeSI-like protein sdu1 (sdu1) (Schizosaccharomyces pombe (strain 972 / ATCC 24843) (Fission yeast)).